We begin with the raw amino-acid sequence, 158 residues long: 18.1 kDa class I heat shock protein (158 aa).

One can recognise a sHSP domain in the interval 44-158 (ENPAFVSTRV…AEVKSIEISG (115 aa)).

This sequence belongs to the small heat shock protein (HSP20) family. Forms oligomeric structures.

The protein localises to the cytoplasm. This chain is 18.1 kDa class I heat shock protein (HSP18.1), found in Pisum sativum (Garden pea).